The following is a 512-amino-acid chain: Transcriptional activator CadC (512 aa).

Residues 1-154 (MQQPVVRVGE…PPEQSPVKSK (154 aa)) are Cytoplasmic-facing. Positions 3-102 (QPVVRVGEWL…VPKRGYKLMV (100 aa)) form a DNA-binding region, ompR/PhoB-type. The helical transmembrane segment at 155–180 (RFTTFWVWFFFLLSLGICVALVAFSS) threads the bilayer. Over 181-512 (LDTRLPMSKS…PYLDKFLASE (332 aa)) the chain is Periplasmic. C208 and C272 are disulfide-bonded.

Homodimer. Dimerization of the periplasmic domain is required for activation of the cadBA operon. Interacts strongly with the lysine permease LysP in the absence of lysine or at low lysine concentrations. Interaction is markedly attenuated under increasing lysine levels. Concomitant pH-dependent protonation of periplasmic amino acids in both proteins dissolves their electrostatic connections resulting in further destabilization of the CadC/LysP interaction. In terms of processing, contains a functionally important disulfide bond, which may provide structural support for the pH-dependent activation via a switch of the sensor between the inactive and active state.

It localises to the cell inner membrane. With respect to regulation, activation of CadC requires two stimuli, lysine and low pH. CadC shows an extremely low affinity for lysine, and it senses the extracellular lysine not directly but indirectly via interaction with the lysine permease LysP. At a low external lysine concentration, CadC is inactivated by an interaction with LysP. When lysine is abundantly available, the interaction between LysP and CadC is released, and CadC becomes susceptible to activation by low pH. Acidification of the external milieu is sensed by protonation of a patch of acidic amino acids within the periplasmic domain and associated to conformational and/or oligomerization effects. The pH-dependent regulation may be due to the presence/absence of a disulfide bond within the periplasmic domain. At pH 7.6, a disulfide bond is found in the inactive state of CadC. At pH 5.8, disulfide bond formation is prevented, which transforms CadC into a semi-active state with respect to both the pH and the lysine stimuli. Activity is also feedback inhibited by cadaverine. Cadaverine binds first to the central cavity, which putatively triggers intramolecular rearrangements to expose the binding sites for cadaverine at the dimer interface, which inactivates CadC and consequently shuts off transcription of the cadBA operon. In terms of biological role, regulates the lysine- and pH-dependent expression of the lysine decarboxylase CadA and the cadaverine-lysine antiporter CadB. At low external pH, and in the presence of external lysine, CadC activates transcription of the cadBA operon by binding directly to two sites, Cad1 and Cad2, within the cadBA promoter region (Pcad). Preferentially binds to AT-rich regions within the Cad1 promoter. The sequence is that of Transcriptional activator CadC (cadC) from Escherichia coli (strain K12).